A 441-amino-acid chain; its full sequence is Mitochondrial distribution and morphology protein 12 (441 aa).

Residues 1–441 (MSIDIDWERA…VYPSFWTFLV (441 aa)) form the SMP-LTD domain. Disordered stretches follow at residues 68-89 (DFYE…PMRE) and 183-289 (RAVT…RMRE). Composition is skewed to polar residues over residues 226–245 (SRPS…SVST) and 253–263 (PSQTLLANNPG).

This sequence belongs to the MDM12 family. Component of the ER-mitochondria encounter structure (ERMES) or MDM complex, composed of MMM1, MDM10, MDM12 and MDM34. An MMM1 homodimer associates with one molecule of MDM12 on each side in a pairwise head-to-tail manner, and the SMP-LTD domains of MMM1 and MDM12 generate a continuous hydrophobic tunnel for phospholipid trafficking.

Its subcellular location is the mitochondrion outer membrane. The protein resides in the endoplasmic reticulum membrane. Component of the ERMES/MDM complex, which serves as a molecular tether to connect the endoplasmic reticulum (ER) and mitochondria. Components of this complex are involved in the control of mitochondrial shape and protein biogenesis, and function in nonvesicular lipid trafficking between the ER and mitochondria. MDM12 is required for the interaction of the ER-resident membrane protein MMM1 and the outer mitochondrial membrane-resident beta-barrel protein MDM10. The MDM12-MMM1 subcomplex functions in the major beta-barrel assembly pathway that is responsible for biogenesis of all mitochondrial outer membrane beta-barrel proteins, and acts in a late step after the SAM complex. The MDM10-MDM12-MMM1 subcomplex further acts in the TOM40-specific pathway after the action of the MDM12-MMM1 complex. Essential for establishing and maintaining the structure of mitochondria and maintenance of mtDNA nucleoids. In Paracoccidioides lutzii (strain ATCC MYA-826 / Pb01) (Paracoccidioides brasiliensis), this protein is Mitochondrial distribution and morphology protein 12.